The sequence spans 63 residues: 2-hydroxymuconate tautomerase (63 aa).

Pro2 serves as the catalytic Proton acceptor; via imino nitrogen.

It belongs to the 4-oxalocrotonate tautomerase family. As to quaternary structure, homohexamer.

It catalyses the reaction (2Z,4E)-2-hydroxyhexa-2,4-dienedioate = (3E)-2-oxohex-3-enedioate. It participates in aromatic compound metabolism; salicylate degradation. Catalyzes the ketonization of 2-hydroxymuconate stereoselectively to yield 2-oxo-3-hexenedioate. The sequence is that of 2-hydroxymuconate tautomerase (nahJ) from Stutzerimonas stutzeri (Pseudomonas stutzeri).